The sequence spans 450 residues: Phosphoglucosamine mutase (450 aa).

Ser107 (phosphoserine intermediate) is an active-site residue. Residues Ser107, Asp246, Asp248, and Asp250 each contribute to the Mg(2+) site. Residue Ser107 is modified to Phosphoserine.

The protein belongs to the phosphohexose mutase family. It depends on Mg(2+) as a cofactor. In terms of processing, activated by phosphorylation.

The enzyme catalyses alpha-D-glucosamine 1-phosphate = D-glucosamine 6-phosphate. Catalyzes the conversion of glucosamine-6-phosphate to glucosamine-1-phosphate. The chain is Phosphoglucosamine mutase from Aromatoleum aromaticum (strain DSM 19018 / LMG 30748 / EbN1) (Azoarcus sp. (strain EbN1)).